The following is a 338-amino-acid chain: UDP-3-O-acylglucosamine N-acyltransferase (338 aa).

Catalysis depends on His251, which acts as the Proton acceptor.

Belongs to the transferase hexapeptide repeat family. LpxD subfamily. Homotrimer.

It catalyses the reaction a UDP-3-O-[(3R)-3-hydroxyacyl]-alpha-D-glucosamine + a (3R)-hydroxyacyl-[ACP] = a UDP-2-N,3-O-bis[(3R)-3-hydroxyacyl]-alpha-D-glucosamine + holo-[ACP] + H(+). The protein operates within bacterial outer membrane biogenesis; LPS lipid A biosynthesis. Its function is as follows. Catalyzes the N-acylation of UDP-3-O-acylglucosamine using 3-hydroxyacyl-ACP as the acyl donor. Is involved in the biosynthesis of lipid A, a phosphorylated glycolipid that anchors the lipopolysaccharide to the outer membrane of the cell. This is UDP-3-O-acylglucosamine N-acyltransferase from Psychrobacter cryohalolentis (strain ATCC BAA-1226 / DSM 17306 / VKM B-2378 / K5).